The primary structure comprises 655 residues: Putative calcium up-regulated protein J (655 aa).

One can recognise a Ricin B-type lectin domain in the interval 40-181; that stretch reads KSRAMLKGDN…DNVCFQWDLE (142 aa).

Belongs to the cup family.

The protein is Putative calcium up-regulated protein J (cupJ) of Dictyostelium discoideum (Social amoeba).